The sequence spans 335 residues: Beta-ketoacyl-[acyl-carrier-protein] synthase III (335 aa).

Residues Cys119 and His261 contribute to the active site. The ACP-binding stretch occupies residues 262–266 (QANQR). Asn291 is a catalytic residue.

This sequence belongs to the thiolase-like superfamily. FabH family. As to quaternary structure, homodimer.

The protein resides in the cytoplasm. The enzyme catalyses malonyl-[ACP] + acetyl-CoA + H(+) = 3-oxobutanoyl-[ACP] + CO2 + CoA. It functions in the pathway lipid metabolism; fatty acid biosynthesis. Catalyzes the condensation reaction of fatty acid synthesis by the addition to an acyl acceptor of two carbons from malonyl-ACP. Catalyzes the first condensation reaction which initiates fatty acid synthesis and may therefore play a role in governing the total rate of fatty acid production. Possesses both acetoacetyl-ACP synthase and acetyl transacylase activities. Its substrate specificity determines the biosynthesis of branched-chain and/or straight-chain of fatty acids. The chain is Beta-ketoacyl-[acyl-carrier-protein] synthase III from Prochlorococcus marinus subsp. pastoris (strain CCMP1986 / NIES-2087 / MED4).